A 773-amino-acid polypeptide reads, in one-letter code: Polymeric immunoglobulin receptor (773 aa).

The signal sequence occupies residues 1–18; it reads MALFLLTCLLAVFSAATA. Topologically, residues 19–647 are extracellular; it reads QSSLLGPSSI…SASGQSGSAK (629 aa). The Ig-like V-type 1; required for binding to polymeric IgA and IgM domain occupies 25–131; that stretch reads PSSIFGPGEV…RGLDFGVNVL (107 aa). 5 disulfide bridges follow: C46–C115, C155–C225, C260–C324, C369–C438, and C478–C538. K88 carries an N-linked (GlcNAc...) asparagine; in variant N-88 glycan. A glycan (N-linked (GlcNAc...) asparagine) is linked at N108. Ig-like V-type domains follow at residues 138–232, 233–340, 352–455, and 461–557; these read PDDV…SDPT, AEEQ…TQLR, RSPP…LQIV, and PTID…VELT. N418 carries N-linked (GlcNAc...) asparagine glycosylation. The tract at residues 619-641 is disordered; sequence AVQSAEDPASGSRASVDASSASG. Over residues 632–641 the composition is skewed to low complexity; the sequence is ASVDASSASG. The chain crosses the membrane as a helical span at residues 648–670; the sequence is VLISTLVPLGLVLAAGAMAVAIA. Residues 671–773 are Cytoplasmic-facing; that stretch reads RARHRRNVDR…AEHQDGPKEA (103 aa). 4 positions are modified to phosphoserine: S682, S691, S698, and S744. The disordered stretch occupies residues 725–746; the sequence is ATATESTVEIEEPKKAKRSSKE. Residues 735 to 746 are compositionally biased toward basic and acidic residues; the sequence is EEPKKAKRSSKE.

As to quaternary structure, interacts (mainly via CDR1-like domain) with dimeric IgA. Interacts (mainly via CDR2-like domain) with pentameric IgM. Either free or part of the secretory IgA (sIgA) complex that consists of two, four or five IgA monomers, and two additional non-Ig polypeptides, namely the JCHAIN and the secretory component (the proteolytic product of PIGR). Free secretory component interacts with bacterial antigens toxA of C.difficile and eae of E.coli. N-glycosylated. N-glycosylation is required for anchoring IgA molecules to mucus, but is not necessary for Ig binding.

The protein localises to the cell membrane. It is found in the secreted. Functionally, mediates selective transcytosis of polymeric IgA and IgM across mucosal epithelial cells. Binds polymeric IgA and IgM at the basolateral surface of epithelial cells. The complex is then transported across the cell to be secreted at the apical surface. During this process, a cleavage occurs that separates the extracellular (known as the secretory component) from the transmembrane segment. In terms of biological role, through its N-linked glycans ensures anchoring of secretory IgA (sIgA) molecules to mucus lining the epithelial surface to neutralize extracellular pathogens. On its own (free form) may act as a non-specific microbial scavenger to prevent pathogen interaction with epithelial cells. In Oryctolagus cuniculus (Rabbit), this protein is Polymeric immunoglobulin receptor (PIGR).